Reading from the N-terminus, the 1026-residue chain is RecBCD enzyme subunit RecB (1026 aa).

Residues 1–438 form the UvrD-like helicase ATP-binding domain; it reads MSSFDIFSPT…LILDTNYRST (438 aa). Residues 1–766 form a DNA-binding and helicase activity, interacts with RecC region; sequence MSSFDIFSPT…LANYANVTKH (766 aa). 21 to 28 provides a ligand contact to ATP; it reads ASAGTGKT. Residues 815–1026 are nuclease activity, interacts with RecD and RecA; sequence SRTIHSFSST…KGNGFLQPGR (212 aa). His854, Asp940, and Asp953 together coordinate Mg(2+). Asp953 functions as the For nuclease activity in the catalytic mechanism.

Belongs to the helicase family. UvrD subfamily. In terms of assembly, heterotrimer of RecB, RecC and RecD. All subunits contribute to DNA-binding. Interacts with RecA. Requires Mg(2+) as cofactor.

The catalysed reaction is Exonucleolytic cleavage (in the presence of ATP) in either 5'- to 3'- or 3'- to 5'-direction to yield 5'-phosphooligonucleotides.. The enzyme catalyses Couples ATP hydrolysis with the unwinding of duplex DNA by translocating in the 3'-5' direction.. It carries out the reaction ATP + H2O = ADP + phosphate + H(+). In terms of biological role, a helicase/nuclease that prepares dsDNA breaks (DSB) for recombinational DNA repair. Binds to DSBs and unwinds DNA via a highly rapid and processive ATP-dependent bidirectional helicase activity. Unwinds dsDNA until it encounters a Chi (crossover hotspot instigator) sequence from the 3' direction. Cuts ssDNA a few nucleotides 3' to the Chi site. The properties and activities of the enzyme are changed at Chi. The Chi-altered holoenzyme produces a long 3'-ssDNA overhang and facilitates RecA-binding to the ssDNA for homologous DNA recombination and repair. Holoenzyme degrades any linearized DNA that is unable to undergo homologous recombination. In the holoenzyme this subunit contributes ATPase, 3'-5' helicase, exonuclease activity and loads RecA onto ssDNA. In Chlamydia trachomatis serovar D (strain ATCC VR-885 / DSM 19411 / UW-3/Cx), this protein is RecBCD enzyme subunit RecB.